A 430-amino-acid polypeptide reads, in one-letter code: Lipoyl synthase, mitochondrial (430 aa).

A mitochondrion-targeting transit peptide spans 1–29 (MASPVPIQRLQAPLRRSLARAAALSTRSY). A compositionally biased stretch (low complexity) spans 28–58 (SYATIPSGPSSQPTSQESSSAASASAPATKP). Positions 28–62 (SYATIPSGPSSQPTSQESSSAASASAPATKPRPTY) are disordered. Residues Cys-142, Cys-147, Cys-153, Cys-173, Cys-177, Cys-180, and Ser-390 each contribute to the [4Fe-4S] cluster site. The Radical SAM core domain occupies 156–379 (GSNKAAATAT…RQRALDMGFL (224 aa)).

Belongs to the radical SAM superfamily. Lipoyl synthase family. Requires [4Fe-4S] cluster as cofactor.

Its subcellular location is the mitochondrion. It catalyses the reaction [[Fe-S] cluster scaffold protein carrying a second [4Fe-4S](2+) cluster] + N(6)-octanoyl-L-lysyl-[protein] + 2 oxidized [2Fe-2S]-[ferredoxin] + 2 S-adenosyl-L-methionine + 4 H(+) = [[Fe-S] cluster scaffold protein] + N(6)-[(R)-dihydrolipoyl]-L-lysyl-[protein] + 4 Fe(3+) + 2 hydrogen sulfide + 2 5'-deoxyadenosine + 2 L-methionine + 2 reduced [2Fe-2S]-[ferredoxin]. Its pathway is protein modification; protein lipoylation via endogenous pathway; protein N(6)-(lipoyl)lysine from octanoyl-[acyl-carrier-protein]: step 2/2. Catalyzes the radical-mediated insertion of two sulfur atoms into the C-6 and C-8 positions of the octanoyl moiety bound to the lipoyl domains of lipoate-dependent enzymes, thereby converting the octanoylated domains into lipoylated derivatives. This is Lipoyl synthase, mitochondrial from Neurospora crassa (strain ATCC 24698 / 74-OR23-1A / CBS 708.71 / DSM 1257 / FGSC 987).